A 190-amino-acid chain; its full sequence is Adenylate kinase (190 aa).

10 to 15 (AAGKGT) provides a ligand contact to ATP. Residues 30 to 59 (STGDMLRAAIASGSELGQRVSGIMERGELV) form an NMP region. AMP is bound by residues T31, R36, 57 to 59 (ELV), 85 to 88 (GFPR), and Q92. The LID stretch occupies residues 126–136 (GRFAESGRADD). ATP is bound at residue R127. The AMP site is built by R133 and R144. G172 is an ATP binding site.

The protein belongs to the adenylate kinase family. Monomer.

It is found in the cytoplasm. The enzyme catalyses AMP + ATP = 2 ADP. The protein operates within purine metabolism; AMP biosynthesis via salvage pathway; AMP from ADP: step 1/1. Catalyzes the reversible transfer of the terminal phosphate group between ATP and AMP. Plays an important role in cellular energy homeostasis and in adenine nucleotide metabolism. In Phenylobacterium zucineum (strain HLK1), this protein is Adenylate kinase.